The chain runs to 158 residues: L-alanine exporter AlaE (158 aa).

A run of 4 helical transmembrane segments spans residues 23-43, 53-73, 92-112, and 117-137; these read FAMV…VSGM, LVAI…RDAV, VIAY…FVGA, and IITA…AYGY.

The protein belongs to the AlaE exporter family.

Its subcellular location is the cell inner membrane. Its function is as follows. Exports L-alanine. This chain is L-alanine exporter AlaE, found in Cronobacter sakazakii (strain ATCC BAA-894) (Enterobacter sakazakii).